Reading from the N-terminus, the 732-residue chain is Bromodomain-containing factor 1 (732 aa).

Polar residues predominate over residues 1–22 (MSETFPETNTPVQTPSTESFVN). Disordered stretches follow at residues 1–207 (MSET…NLPE), 324–380 (TNVA…ETKP), 491–517 (NKPV…EDNV), 556–600 (REQQ…TPPQ), and 700–732 (VNGQ…SEEE). Residues 37-51 (SQDSDSNQQSSHQEP) are compositionally biased toward low complexity. Positions 89–100 (ASQTGVIQTEVS) are enriched in polar residues. The segment covering 137 to 147 (EAPEENPQEEV) has biased composition (acidic residues). Residues 206–315 (PENPIPQHQA…AQFEKLMVKV (110 aa)) form the Bromo 1 domain. Over residues 327-338 (AEATSVATSPTT) the composition is skewed to polar residues. Positions 370 to 380 (KSKELPYETKP) are enriched in basic and acidic residues. The Bromo 2 domain occupies 383 to 492 (KKVAAELRFC…AVFDKKWANK (110 aa)). Positions 529-569 (AIQVMENQIIRMRKELDELKKEHLKKLREQQAARKKKKQQK) form a coiled coil. The segment covering 561 to 579 (ARKKKKQQKGKRRAPKAKH) has biased composition (basic residues). Pro residues predominate over residues 590–600 (PPEPPKLTPPQ). An NET domain is found at 593–672 (PPKLTPPQPV…GDKALKNSAG (80 aa)). A compositionally biased stretch (acidic residues) spans 718 to 732 (ESSEDEASSESSEEE).

Belongs to the BET family.

It is found in the nucleus. Its function is as follows. Transcription factor involved in the expression of a broad class of genes including snRNAs. Required for sporulation and DNA-damage repair. Prevents the spreading of SIR silencing at telomeres and protects histone H4, but not H3, from deacetylation. This Candida albicans (strain SC5314 / ATCC MYA-2876) (Yeast) protein is Bromodomain-containing factor 1 (BDF1).